Here is an 88-residue protein sequence, read N- to C-terminus: Small cysteine and glycine repeat-containing protein 1 (88 aa).

The 10 X 2 AA repeats of CG stretch occupies residues 4-72 (CGCGGCGGCG…TCSSCGYSCG (69 aa)).

This sequence belongs to the KRTAP type 28 family.

Functionally, in the hair cortex, hair keratin intermediate filaments are embedded in an interfilamentous matrix, consisting of hair keratin-associated proteins (KRTAP), which are essential for the formation of a rigid and resistant hair shaft through their extensive disulfide bond cross-linking with abundant cysteine residues of hair keratins. The matrix proteins include the high-sulfur and high-glycine-tyrosine keratins. The polypeptide is Small cysteine and glycine repeat-containing protein 1 (Homo sapiens (Human)).